The sequence spans 582 residues: MEYTKLAQLYQILEETTSRIKMTQALVDLFKETPPELIDKVVYLSIGRIAPEYTGLDYNFSEKSAIKALSTVLNISEHDIQHQVLQTGDLGDAGKKLYEEKGVKPEGILTVEEVYRTLREIAQTTGYGSTKKKLQLFTELLKKASPLEVKYLLRTITERLRLGIGDNTIMDALSIAFTGKKENREIIERAYNISSDLGYVARILAEKGLDAVKNIKIEIGRPIRPMLAERMAIPSYILKKLGGKAGAEYKYDGERIQVHRKGDTFYLFSRRLENITDQFPDLIEFLKESIPEECIIELEAVVIDPSSGAIRPFQDLMNRRVKYVTRFHIMMYPIAGFIFDIMYLNGEDLTLKPYPERRKILEENIKITERINLSERKIVDNVEDLESFFHQAIEDGCEGLVCKSLQKDSIYQAGKRGFLWIKYKRDYKSHLADTLDLVVVGAFYGKGARTGYFGSLLMACYDPETDQFKTVCKVGTGFKEDDFKKLDDLLKEHTLDHKHPRVNSILSADIWYEPFLVLEITGAELTLSPVHTCGWDRIKINRGLGLRFPRFTGRYRFDKRPEDATTEEEIINMYKNQIQIKS.

Glu248 is an ATP binding site. Lys250 (N6-AMP-lysine intermediate) is an active-site residue. 6 residues coordinate ATP: Arg255, Arg270, Glu299, Phe339, Arg416, and Lys422.

This sequence belongs to the ATP-dependent DNA ligase family. Mg(2+) serves as cofactor.

It catalyses the reaction ATP + (deoxyribonucleotide)n-3'-hydroxyl + 5'-phospho-(deoxyribonucleotide)m = (deoxyribonucleotide)n+m + AMP + diphosphate.. In terms of biological role, DNA ligase that seals nicks in double-stranded DNA during DNA replication, DNA recombination and DNA repair. The protein is Probable DNA ligase of Persephonella marina (strain DSM 14350 / EX-H1).